Here is a 120-residue protein sequence, read N- to C-terminus: U13-lycotoxin-Ls1a (120 aa).

An N-terminal signal peptide occupies residues 1–16 (MKILFVLISILYAVYC). The propeptide occupies 17–54 (FSSEEDVDSAYLANELEPVEDINSEQYAALEPKEEQER). Disulfide bonds link cysteine 56–cysteine 70, cysteine 63–cysteine 76, cysteine 69–cysteine 87, and cysteine 78–cysteine 85. The 40-residue stretch at 56 to 95 (CADMGQDCKDDCDCCLNIATCNCWFGRYFCSCTFGDYQTC) folds into the Agouti domain.

This sequence belongs to the neurotoxin 05 (agouti) family. In terms of processing, contains 6 disulfide bonds. Expressed by the venom gland.

It localises to the secreted. The chain is U13-lycotoxin-Ls1a from Lycosa singoriensis (Wolf spider).